We begin with the raw amino-acid sequence, 224 residues long: Protein PLANT CADMIUM RESISTANCE 6 (224 aa).

The chain crosses the membrane as a helical span at residues 131 to 151; that stretch reads GMLYGLICCLFAIPCVYTCTF.

This sequence belongs to the cornifelin family.

The protein resides in the membrane. Functionally, may be involved in heavy metals transport. In Arabidopsis thaliana (Mouse-ear cress), this protein is Protein PLANT CADMIUM RESISTANCE 6 (PCR6).